A 58-amino-acid polypeptide reads, in one-letter code: Potassium channel toxin alpha-KTx 9.9 (58 aa).

Residues 1-21 form the signal peptide; sequence KKTSRLFTLVLIVLAMNVMMA. The propeptide occupies 22-30; that stretch reads IISDPVVEA. Cystine bridges form between Cys-33–Cys-49, Cys-36–Cys-54, and Cys-40–Cys-56.

Belongs to the short scorpion toxin superfamily. Potassium channel inhibitor family. Alpha-KTx 09 subfamily. Expressed by the venom gland.

The protein resides in the secreted. Functionally, potassium channel inhibitor. This chain is Potassium channel toxin alpha-KTx 9.9, found in Buthus israelis (Israeli scorpion).